The primary structure comprises 352 residues: Divinyl chlorophyll a/b light-harvesting protein PcbB (352 aa).

Helical transmembrane passes span Phe27–Leu47, Cys89–Leu109, Phe142–Ala162, Val203–Ile223, Ala243–Ser263, and Leu307–Leu327.

Belongs to the PsbB/PsbC family. IsiA/Pcb subfamily. As to quaternary structure, the antenna complex consists of divinyl chlorophylls (a and b) and divinyl chlorophyll a/b binding proteins and binds more divinyl chlorophyll b than does the antenna complex from high-light-adapted Prochlorococcus. It depends on divinyl chlorophyll a as a cofactor. Requires divinyl chlorophyll b as cofactor.

The protein localises to the cellular thylakoid membrane. In terms of biological role, the antenna complex functions as a light receptor, it captures and delivers excitation energy to photosystems II and I. The Prochlorales pcb genes are not related to higher plant LHCs. This is Divinyl chlorophyll a/b light-harvesting protein PcbB (pcbB) from Prochlorococcus marinus (strain NATL2A).